A 592-amino-acid chain; its full sequence is Aspartate--tRNA ligase (592 aa).

Residue glutamate 171 participates in L-aspartate binding. The aspartate stretch occupies residues 195–198; it reads QLFK. Arginine 217 contributes to the L-aspartate binding site. Residues 217-219 and glutamine 226 each bind ATP; that span reads RDE. An L-aspartate-binding site is contributed by histidine 448. Glutamate 482 lines the ATP pocket. Arginine 489 lines the L-aspartate pocket. An ATP-binding site is contributed by 534–537; the sequence is GLDR.

The protein belongs to the class-II aminoacyl-tRNA synthetase family. Type 1 subfamily. As to quaternary structure, homodimer.

The protein localises to the cytoplasm. The enzyme catalyses tRNA(Asp) + L-aspartate + ATP = L-aspartyl-tRNA(Asp) + AMP + diphosphate. Catalyzes the attachment of L-aspartate to tRNA(Asp) in a two-step reaction: L-aspartate is first activated by ATP to form Asp-AMP and then transferred to the acceptor end of tRNA(Asp). The sequence is that of Aspartate--tRNA ligase from Vibrio vulnificus (strain CMCP6).